Consider the following 197-residue polypeptide: Imidazoleglycerol-phosphate dehydratase (197 aa).

It belongs to the imidazoleglycerol-phosphate dehydratase family.

The protein resides in the cytoplasm. It carries out the reaction D-erythro-1-(imidazol-4-yl)glycerol 3-phosphate = 3-(imidazol-4-yl)-2-oxopropyl phosphate + H2O. It functions in the pathway amino-acid biosynthesis; L-histidine biosynthesis; L-histidine from 5-phospho-alpha-D-ribose 1-diphosphate: step 6/9. The polypeptide is Imidazoleglycerol-phosphate dehydratase (Gloeobacter violaceus (strain ATCC 29082 / PCC 7421)).